The chain runs to 197 residues: GTP cyclohydrolase-2 (197 aa).

Position 50–54 (50–54) interacts with GTP; the sequence is RIHSE. 3 residues coordinate Zn(2+): Cys-55, Cys-66, and Cys-68. Residues Gln-71, 93 to 95, and Thr-115 each bind GTP; that span reads EGR. Asp-127 functions as the Proton acceptor in the catalytic mechanism. Arg-129 acts as the Nucleophile in catalysis. GTP contacts are provided by Thr-150 and Lys-155.

Belongs to the GTP cyclohydrolase II family. It depends on Zn(2+) as a cofactor.

It carries out the reaction GTP + 4 H2O = 2,5-diamino-6-hydroxy-4-(5-phosphoribosylamino)-pyrimidine + formate + 2 phosphate + 3 H(+). The protein operates within cofactor biosynthesis; riboflavin biosynthesis; 5-amino-6-(D-ribitylamino)uracil from GTP: step 1/4. In terms of biological role, catalyzes the conversion of GTP to 2,5-diamino-6-ribosylamino-4(3H)-pyrimidinone 5'-phosphate (DARP), formate and pyrophosphate. The sequence is that of GTP cyclohydrolase-2 from Aeromonas hydrophila subsp. hydrophila (strain ATCC 7966 / DSM 30187 / BCRC 13018 / CCUG 14551 / JCM 1027 / KCTC 2358 / NCIMB 9240 / NCTC 8049).